Reading from the N-terminus, the 137-residue chain is Cellular retinoic acid-binding protein 1 (137 aa).

The short motif at 21–31 (KALGVNAMLRK) is the Nuclear localization signal element. 132–134 (RIY) provides a ligand contact to all-trans-retinoate.

Belongs to the calycin superfamily. Fatty-acid binding protein (FABP) family.

It is found in the cytoplasm. In terms of biological role, cytosolic CRABPs may regulate the access of retinoic acid to the nuclear retinoic acid receptors. The polypeptide is Cellular retinoic acid-binding protein 1 (CRABP1) (Gallus gallus (Chicken)).